The sequence spans 255 residues: Hydroxyacylglutathione hydrolase (255 aa).

Zn(2+) is bound by residues His53, His55, Asp57, His58, His110, Asp127, and His165.

The protein belongs to the metallo-beta-lactamase superfamily. Glyoxalase II family. In terms of assembly, monomer. Zn(2+) is required as a cofactor.

It carries out the reaction an S-(2-hydroxyacyl)glutathione + H2O = a 2-hydroxy carboxylate + glutathione + H(+). It functions in the pathway secondary metabolite metabolism; methylglyoxal degradation; (R)-lactate from methylglyoxal: step 2/2. Thiolesterase that catalyzes the hydrolysis of S-D-lactoyl-glutathione to form glutathione and D-lactic acid. The sequence is that of Hydroxyacylglutathione hydrolase from Xanthomonas oryzae pv. oryzae (strain MAFF 311018).